Here is a 563-residue protein sequence, read N- to C-terminus: Forkhead box protein O (563 aa).

2 disordered regions span residues 1-72 (MDDF…DPQQ) and 177-243 (KSVR…SYQL). At Thr-43 the chain carries Phosphothreonine; by PKB/AKT1. Over residues 58–72 (TKASNQQLANGDPQQ) the composition is skewed to polar residues. The fork-head DNA-binding region spans 90 to 196 (WGNLSYADLI…ETSRYEKRRG (107 aa)). Ser-185 carries the phosphoserine; by PKB/AKT1 modification. The segment covering 216–225 (ATPSPSSSVS) has biased composition (polar residues). Residue Ser-253 is modified to Phosphoserine; by PKB/AKT1. Residues Ser-256, Ser-257, and Ser-262 each carry the phosphoserine modification. Positions 317-371 (AASGLPTQPPPPYQPPQHPQHTQGYALNGPGLSPNSVTTTMSPAYPNSEPSSDSL) are disordered. Pro residues predominate over residues 323 to 334 (TQPPPPYQPPQH). A compositionally biased stretch (polar residues) spans 349–358 (SPNSVTTTMS).

As to quaternary structure, interacts with melt.

The protein localises to the cytoplasm. It localises to the nucleus. Its function is as follows. Transcription factor involved in the regulation of the insulin signaling pathway. Consistently activates both the downstream target Thor\d4EBP and the feedback control target InR. Involved in negative regulation of the cell cycle, modulating cell growth and proliferation. In response to cellular stresses, such as nutrient deprivation or increased levels of reactive oxygen species, foxo is activated and inhibits growth through the action of target genes such as Thor. Foxo activated in the adult fat body can regulate lifespan in adults; an insulin peptide itself may function as one secondary messenger of insulin-regulated aging. Also regulates Lip4, homolog of human acid lipases, thereby acting as a key modulator of lipid metabolism by insulin signaling and integrates insulin responses to glucose and lipid homeostasis. The sequence is that of Forkhead box protein O from Drosophila mojavensis (Fruit fly).